A 291-amino-acid chain; its full sequence is Potassium-transporting ATPase subunit beta (291 aa).

Residues 1-36 (MAALQEKKTCGQRMEEFQRYCWNPDTGQMLGRTLSR) lie on the Cytoplasmic side of the membrane. The chain crosses the membrane as a helical; Signal-anchor for type II membrane protein span at residues 37–57 (WVWISLYYVAFYVVMTGLFAL). At 58-291 (CLYVLMQTVD…KVEFKLKIEK (234 aa)) the chain is on the extracellular side. Asn-99, Asn-103, Asn-130, Asn-146, and Asn-161 each carry an N-linked (GlcNAc...) asparagine glycan. Cys-131 and Cys-152 are oxidised to a cystine. Cysteines 162 and 178 form a disulfide. N-linked (GlcNAc...) asparagine glycosylation is found at Asn-193 and Asn-222. Residues 194–291 (GSAPRVDCAF…KVEFKLKIEK (98 aa)) form an immunoglobulin-like region. A disulfide bond links Cys-201 and Cys-263.

This sequence belongs to the X(+)/potassium ATPases subunit beta family. As to quaternary structure, the ATPase pump is composed of two subunits: alpha (catalytic) and beta (regulatory). Interacts with alpha subunit ATP12A; this interaction is required for the formation of a functionally active pump and targeting at the plasma membrane. Interacts (via N-terminus) with alpha subunit ATP4A (via the P-domain). In terms of processing, N-glycosylation is necessary for assembly and functional expression of the pump at the plasma membrane.

It localises to the apical cell membrane. The protein resides in the cell membrane. Functionally, the beta subunit of the gastric H(+)/K(+) ATPase pump which transports H(+) ions in exchange for K(+) ions across the apical membrane of parietal cells. Plays a structural and regulatory role in the assembly and membrane targeting of a functionally active pump. Within a transport cycle, the transfer of a H(+) ion across the membrane is coupled to ATP hydrolysis and is associated with a transient phosphorylation of the alpha subunit that shifts the pump conformation from inward-facing (E1) to outward-facing state (E2). Interacts with the phosphorylation domain of the alpha subunit and functions as a ratchet, stabilizing the lumenal-open E2 conformation and preventing the reverse reaction of the transport cycle. The polypeptide is Potassium-transporting ATPase subunit beta (Homo sapiens (Human)).